Here is a 213-residue protein sequence, read N- to C-terminus: Small ribosomal subunit protein eS6 (213 aa).

It belongs to the eukaryotic ribosomal protein eS6 family.

In Sulfolobus acidocaldarius (strain ATCC 33909 / DSM 639 / JCM 8929 / NBRC 15157 / NCIMB 11770), this protein is Small ribosomal subunit protein eS6.